The primary structure comprises 463 residues: ATP-dependent protease ATPase subunit HslU (463 aa).

Residues Ile19, 61-66, Asp277, Glu341, and Arg413 each bind ATP; that span reads GVGKTE.

The protein belongs to the ClpX chaperone family. HslU subfamily. As to quaternary structure, a double ring-shaped homohexamer of HslV is capped on each side by a ring-shaped HslU homohexamer. The assembly of the HslU/HslV complex is dependent on binding of ATP.

It is found in the cytoplasm. ATPase subunit of a proteasome-like degradation complex; this subunit has chaperone activity. The binding of ATP and its subsequent hydrolysis by HslU are essential for unfolding of protein substrates subsequently hydrolyzed by HslV. HslU recognizes the N-terminal part of its protein substrates and unfolds these before they are guided to HslV for hydrolysis. This chain is ATP-dependent protease ATPase subunit HslU, found in Bacillus cereus (strain 03BB102).